The following is a 558-amino-acid chain: MTTTTTKFRDVEIRAPRGTELTAKSWLTEAPLRMLMNNLDPDVAENPKELVVYGGIGRAARNWECFDKIVDTLKNLETDETLLVQSGKPVGVFKTHKDAPRVLIANSNLVPHWANWEHFNELDAKALAMYGQMTAGSWIYIGSQGIVQGTYETFVEAGRQHYNGDLKGRWVLTAGLGGMGGAQPLAATLAGACSLNIECQQASIDFRLRTRYVDEQATDLDDALARIDRYTKEGKAISIALHGNAAEILPELVRRGVRPDMVTDQTSAHDPLNGYLPVGWTWEEYRERAKTEPEAVVKAAKQSMAKHVQAMLDFQKMGVPTFDYGNNIRQMAKEEGVANAFDFPGFVPAYIRPLFCRGIGPFRWAALSGDPEDIYKTDAKVKELIPDDEHLHHWLDMARERISFQGLPARICWVGLGLRAKLGLAFNEMVRSGELSAPIVIGRDHLDSGSVASPNRETEAMQDGSDAVSDWPLLNALLNTAGGATWVSLHHGGGVGMGFSQHSGVVIVCDGTDEAAARIARVLTNDPATGVMRHADAGYEIAINCAKEQGLHLPMITQ.

NAD(+) is bound by residues 54 to 55 (GG), glutamine 132, 178 to 180 (GMG), glutamate 198, 244 to 245 (NA), 265 to 269 (QTSAH), 275 to 276 (YL), and tyrosine 324. The active site involves cysteine 412. Glycine 494 serves as a coordination point for NAD(+).

This sequence belongs to the urocanase family. The cofactor is NAD(+).

Its subcellular location is the cytoplasm. It catalyses the reaction 4-imidazolone-5-propanoate = trans-urocanate + H2O. It functions in the pathway amino-acid degradation; L-histidine degradation into L-glutamate; N-formimidoyl-L-glutamate from L-histidine: step 2/3. In terms of biological role, catalyzes the conversion of urocanate to 4-imidazolone-5-propionate. This chain is Urocanate hydratase, found in Acinetobacter baumannii (strain ACICU).